The following is a 264-amino-acid chain: Hydroxyethylthiazole kinase (264 aa).

Position 43 (M43) interacts with substrate. The ATP site is built by R119 and T165. G192 lines the substrate pocket.

It belongs to the Thz kinase family. The cofactor is Mg(2+).

The catalysed reaction is 5-(2-hydroxyethyl)-4-methylthiazole + ATP = 4-methyl-5-(2-phosphooxyethyl)-thiazole + ADP + H(+). The protein operates within cofactor biosynthesis; thiamine diphosphate biosynthesis; 4-methyl-5-(2-phosphoethyl)-thiazole from 5-(2-hydroxyethyl)-4-methylthiazole: step 1/1. Its function is as follows. Catalyzes the phosphorylation of the hydroxyl group of 4-methyl-5-beta-hydroxyethylthiazole (THZ). The protein is Hydroxyethylthiazole kinase of Anoxybacillus flavithermus (strain DSM 21510 / WK1).